We begin with the raw amino-acid sequence, 150 residues long: Transcription antitermination protein NusB (150 aa).

This sequence belongs to the NusB family.

Its function is as follows. Involved in transcription antitermination. Required for transcription of ribosomal RNA (rRNA) genes. Binds specifically to the boxA antiterminator sequence of the ribosomal RNA (rrn) operons. The polypeptide is Transcription antitermination protein NusB (Saccharophagus degradans (strain 2-40 / ATCC 43961 / DSM 17024)).